Here is a 486-residue protein sequence, read N- to C-terminus: ATP-dependent rRNA helicase RRP3 (486 aa).

The disordered stretch occupies residues 1–58 (MNGAKRRKVAQDTPRNTKPVAQEKPARAEPKPSSDEESEEESATLEEPSAEETAVDAP). Basic and acidic residues predominate over residues 24 to 34 (KPARAEPKPSS). Positions 35–54 (DEESEEESATLEEPSAEETA) are enriched in acidic residues. The Q motif motif lies at 60-88 (KTFKDLGVNDALCEACEKLNYKYPTPIQE). The 172-residue stretch at 91–262 (IPVALQGRDI…RASLRDPVKV (172 aa)) folds into the Helicase ATP-binding domain. 104–111 (AETGSGKT) is a binding site for ATP. Residues 210 to 213 (DEAD) carry the DEAD box motif. The 149-residue stretch at 286–434 (QKDVHLIYLI…EYPTEKEEVM (149 aa)) folds into the Helicase C-terminal domain. 2 stretches are compositionally biased toward basic and acidic residues: residues 451–460 (MKSFTEERGK) and 476–486 (RGRDDMDREEG). A disordered region spans residues 451 to 486 (MKSFTEERGKKGSTLKGGRGKKGGKRGRDDMDREEG).

Belongs to the DEAD box helicase family. DDX47/RRP3 subfamily. In terms of assembly, interacts with the SSU processome.

The protein localises to the nucleus. It catalyses the reaction ATP + H2O = ADP + phosphate + H(+). In terms of biological role, ATP-dependent rRNA helicase required for pre-ribosomal RNA processing. Involved in the maturation of the 35S-pre-rRNA and to its cleavage to mature 18S rRNA. This Gibberella zeae (strain ATCC MYA-4620 / CBS 123657 / FGSC 9075 / NRRL 31084 / PH-1) (Wheat head blight fungus) protein is ATP-dependent rRNA helicase RRP3.